The following is a 202-amino-acid chain: Small ribosomal subunit protein uS4 (202 aa).

Positions 1 to 13 are enriched in basic residues; the sequence is MSRYRGPRLRVTR. The interval 1 to 42 is disordered; it reads MSRYRGPRLRVTRRLGELPGLTRKASKKSNPPGQHGQARRKR. An S4 RNA-binding domain is found at 90-152; the sequence is NRLDNVCFRL…KASKKLVEGN (63 aa).

The protein belongs to the universal ribosomal protein uS4 family. In terms of assembly, part of the 30S ribosomal subunit. Contacts protein S5. The interaction surface between S4 and S5 is involved in control of translational fidelity.

Its function is as follows. One of the primary rRNA binding proteins, it binds directly to 16S rRNA where it nucleates assembly of the body of the 30S subunit. In terms of biological role, with S5 and S12 plays an important role in translational accuracy. The chain is Small ribosomal subunit protein uS4 from Prochlorococcus marinus subsp. pastoris (strain CCMP1986 / NIES-2087 / MED4).